The sequence spans 391 residues: Anhydro-N-acetylmuramic acid kinase (391 aa).

9 to 16 is a binding site for ATP; the sequence is GTSYDAVE.

The protein belongs to the anhydro-N-acetylmuramic acid kinase family.

The enzyme catalyses 1,6-anhydro-N-acetyl-beta-muramate + ATP + H2O = N-acetyl-D-muramate 6-phosphate + ADP + H(+). It functions in the pathway amino-sugar metabolism; 1,6-anhydro-N-acetylmuramate degradation. The protein operates within cell wall biogenesis; peptidoglycan recycling. Its function is as follows. Catalyzes the specific phosphorylation of 1,6-anhydro-N-acetylmuramic acid (anhMurNAc) with the simultaneous cleavage of the 1,6-anhydro ring, generating MurNAc-6-P. Is required for the utilization of anhMurNAc either imported from the medium or derived from its own cell wall murein, and thus plays a role in cell wall recycling. This chain is Anhydro-N-acetylmuramic acid kinase, found in Streptomyces coelicolor (strain ATCC BAA-471 / A3(2) / M145).